Here is a 99-residue protein sequence, read N- to C-terminus: Small integral membrane protein 14 (99 aa).

The Lumenal segment spans residues methionine 1–serine 49. The chain crosses the membrane as a helical span at residues glycine 50–leucine 70. The Cytoplasmic segment spans residues arginine 71–aspartate 99. The segment at glycine 77–aspartate 99 is disordered.

In terms of tissue distribution, ubiquitously expressed.

The protein localises to the endoplasmic reticulum membrane. The chain is Small integral membrane protein 14 (Smim14) from Mus musculus (Mouse).